The following is a 443-amino-acid chain: Two-pore potassium channel 2 (443 aa).

Over 1–144 (MANDGNGDNN…KTDQQSDSKT (144 aa)) the chain is Cytoplasmic. The tract at residues 67-109 (SLPIDALSQNPSTSSSATTSFSDSTDLLLPLTEPNKPVRKSKP) is disordered. Residues 72–98 (ALSQNPSTSSSATTSFSDSTDLLLPLT) are compositionally biased toward low complexity. The helical transmembrane segment at 145 to 165 (IVNQAVALLVVYLSLGVLIYW) threads the bilayer. The segment at residues 181–200 (DALYFCIVTMCTIGYGDITP) is an intramembrane region (pore-forming). Residues 208–228 (FSIFFVLVGFGFMDILLSGMV) traverse the membrane as a helical segment. At 229-274 (TYVLDLQENYMLETARNESLNLNDRDKVRSYIIDVKKGRMRIRLKV) the chain is on the cytoplasmic side. A helical transmembrane segment spans residues 275–295 (GLALGVVVLCLGFGVLIMHFV). An intramembrane region (pore-forming) is located at residues 302–321 (DSFYFSVMSVTTVGYGDRAF). The chain crosses the membrane as a helical span at residues 328-348 (LLAAMWLLVSTLAVARAILFL). The Cytoplasmic segment spans residues 349–443 (AESRVDKRNR…TKDLPTATSI (95 aa)). EF-hand domains lie at 365–400 (LGES…KMDK) and 404–439 (KDIN…DLPT). Aspartate 378, aspartate 380, asparagine 382, cysteine 384, glutamate 389, aspartate 417, serine 421, arginine 423, and aspartate 428 together coordinate Ca(2+).

Belongs to the two pore domain potassium channel (TC 1.A.1.7) family. As to quaternary structure, homodimer. As to expression, expressed in roots, stems, leaves and flowers.

Its subcellular location is the vacuole membrane. Its function is as follows. Probable voltage-independent potassium-selective tonoplast ion channel. This Arabidopsis thaliana (Mouse-ear cress) protein is Two-pore potassium channel 2 (TPK2).